A 465-amino-acid chain; its full sequence is ATP synthase subunit beta (465 aa).

155–162 (GGAGVGKT) contacts ATP.

Belongs to the ATPase alpha/beta chains family. F-type ATPases have 2 components, CF(1) - the catalytic core - and CF(0) - the membrane proton channel. CF(1) has five subunits: alpha(3), beta(3), gamma(1), delta(1), epsilon(1). CF(0) has three main subunits: a(1), b(2) and c(9-12). The alpha and beta chains form an alternating ring which encloses part of the gamma chain. CF(1) is attached to CF(0) by a central stalk formed by the gamma and epsilon chains, while a peripheral stalk is formed by the delta and b chains.

Its subcellular location is the cell membrane. It catalyses the reaction ATP + H2O + 4 H(+)(in) = ADP + phosphate + 5 H(+)(out). Functionally, produces ATP from ADP in the presence of a proton gradient across the membrane. The catalytic sites are hosted primarily by the beta subunits. The chain is ATP synthase subunit beta from Buchnera aphidicola subsp. Baizongia pistaciae (strain Bp).